The chain runs to 339 residues: Transcription factor IIIA (339 aa).

9 consecutive C2H2-type zinc fingers follow at residues 13–37, 43–67, 73–98, 105–129, 135–159, 162–188, 192–214, 221–246, and 252–276; these read YICS…LCKH, FPCK…SITH, FKCD…NRFH, YVCH…QFTH, YKCP…EKVH, YPCK…KECH, VMCD…KKTH, YCCP…QSFH, and FACE…SVVH. Basic and acidic residues-rich tracts occupy residues 275 to 288 and 305 to 316; these read VHDP…EKCP and KSKEKSAAKATE. A disordered region spans residues 275 to 339; it reads VHDPEKRKLK…ETKGSLVIEK (65 aa).

Synthesized in oocytes and, in much lower levels, in somatic cells.

It localises to the nucleus. Involved in ribosomal large subunit biogenesis. Interacts with the internal control region (ICR) of approximately 50 bases within the 5S RNA genes, is required for correct transcription of these genes by RNA polymerase III. Also binds the transcribed 5S RNA's. The sequence is that of Transcription factor IIIA (gtf3a) from Xenopus borealis (Kenyan clawed frog).